The chain runs to 110 residues: Large ribosomal subunit protein uL22 (110 aa).

The protein belongs to the universal ribosomal protein uL22 family. Part of the 50S ribosomal subunit.

In terms of biological role, this protein binds specifically to 23S rRNA; its binding is stimulated by other ribosomal proteins, e.g. L4, L17, and L20. It is important during the early stages of 50S assembly. It makes multiple contacts with different domains of the 23S rRNA in the assembled 50S subunit and ribosome. Functionally, the globular domain of the protein is located near the polypeptide exit tunnel on the outside of the subunit, while an extended beta-hairpin is found that lines the wall of the exit tunnel in the center of the 70S ribosome. The chain is Large ribosomal subunit protein uL22 from Buchnera aphidicola subsp. Acyrthosiphon pisum (strain 5A).